A 292-amino-acid chain; its full sequence is 2,3-dihydroxybenzoate decarboxylase (292 aa).

The active site involves C263.

The protein belongs to the metallo-dependent hydrolases superfamily. Homotetramer.

It catalyses the reaction 2,3-dihydroxybenzoate + H(+) = catechol + CO2. It participates in aromatic compound metabolism; benzoate degradation via hydroxylation. This Aspergillus niger protein is 2,3-dihydroxybenzoate decarboxylase.